We begin with the raw amino-acid sequence, 480 residues long: UDP-glycosyltransferase 71C5 (480 aa).

UDP-alpha-D-glucose is bound by residues Ser-290, 349-351 (APQ), 366-374 (HCGWNSVQE), and 388-391 (YAEQ).

It belongs to the UDP-glycosyltransferase family.

Possesses low quercetin 3-O-glucosyltransferase activity in vitro. This chain is UDP-glycosyltransferase 71C5 (UGT71C5), found in Arabidopsis thaliana (Mouse-ear cress).